The primary structure comprises 650 residues: Probable acyl-CoA dehydrogenase FadE10 (650 aa).

The disordered stretch occupies residues 1–23 (MAQQTQVTEEQARALAEESRESG). Positions 10–23 (EQARALAEESRESG) are enriched in basic and acidic residues. Glu422 acts as the Proton acceptor in catalysis.

Belongs to the acyl-CoA dehydrogenase family. FAD serves as cofactor.

It catalyses the reaction a 2,3-saturated acyl-CoA + A = a 2,3-dehydroacyl-CoA + AH2. The chain is Probable acyl-CoA dehydrogenase FadE10 (fadE10) from Mycobacterium tuberculosis (strain CDC 1551 / Oshkosh).